The sequence spans 287 residues: 4-hydroxybenzoate octaprenyltransferase (287 aa).

Transmembrane regions (helical) follow at residues 19–39 (PIGTLLLLWPTLWALWLASSG), 43–63 (LQMLMIFIAGTFLMRSAGCAI), 94–114 (VVVAGVLALIAFLLIQPLNIF), 118–138 (LSVLALLVAFIYPFTKRFLAI), 142–162 (VLGIAFGFGIPMAYAAVLDFI), 167–187 (WVLFVGNIFWAIAYDTAYAMV), 209–229 (VLAIAFSYGVLFVSQLWVAHL), 235–255 (YFLIGWGAALGCAIYQLKLVS), and 263–283 (FLAFRHNNWLGGFLFLGIVLG).

The protein belongs to the UbiA prenyltransferase family. It depends on Mg(2+) as a cofactor.

It localises to the cell inner membrane. The enzyme catalyses all-trans-octaprenyl diphosphate + 4-hydroxybenzoate = 4-hydroxy-3-(all-trans-octaprenyl)benzoate + diphosphate. Its pathway is cofactor biosynthesis; ubiquinone biosynthesis. Its function is as follows. Catalyzes the prenylation of para-hydroxybenzoate (PHB) with an all-trans polyprenyl group. Mediates the second step in the final reaction sequence of ubiquinone-8 (UQ-8) biosynthesis, which is the condensation of the polyisoprenoid side chain with PHB, generating the first membrane-bound Q intermediate 3-octaprenyl-4-hydroxybenzoate. The sequence is that of 4-hydroxybenzoate octaprenyltransferase from Polynucleobacter asymbioticus (strain DSM 18221 / CIP 109841 / QLW-P1DMWA-1) (Polynucleobacter necessarius subsp. asymbioticus).